Here is a 445-residue protein sequence, read N- to C-terminus: GTPase Der (445 aa).

2 consecutive EngA-type G domains span residues 3 to 167 and 180 to 353; these read PVIA…YAGQ and IKIA…AAAM. Residues 9–16, 56–60, 119–122, 186–193, 233–237, and 298–301 each bind GTP; these read GRPNVGKS, DTGGF, NKAE, DTAGL, and NKWD. In terms of domain architecture, KH-like spans 354–438; the sequence is AKLPTPKLTR…PLRIEFRSSN (85 aa).

This sequence belongs to the TRAFAC class TrmE-Era-EngA-EngB-Septin-like GTPase superfamily. EngA (Der) GTPase family. In terms of assembly, associates with the 50S ribosomal subunit.

GTPase that plays an essential role in the late steps of ribosome biogenesis. The sequence is that of GTPase Der from Burkholderia lata (strain ATCC 17760 / DSM 23089 / LMG 22485 / NCIMB 9086 / R18194 / 383).